Here is a 294-residue protein sequence, read N- to C-terminus: Beta-glucoside kinase (294 aa).

An ATP-binding site is contributed by 5–11 (AFDIGGT).

Belongs to the ROK (NagC/XylR) family.

The catalysed reaction is D-cellobiose + ATP = 6-phospho-beta-D-glucosyl-(1-&gt;4)-D-glucose + ADP + H(+). Functionally, catalyzes the ATP-dependent phosphorylation of cellobiose to produce cellobiose-6'-P. May have a dual role of kinase and transcriptional regulator of the cellobiose-PTS operon. This chain is Beta-glucoside kinase (bglK), found in Listeria innocua serovar 6a (strain ATCC BAA-680 / CLIP 11262).